Consider the following 222-residue polypeptide: Germin-like protein subfamily 1 member 4 (222 aa).

Residues 1–24 (MEGLLQFLLAKIILLALASSFVYC) form the signal peptide. An intrachain disulfide couples Cys34 to Cys50. A glycan (N-linked (GlcNAc...) asparagine) is linked at Asn38. In terms of domain architecture, Cupin type-1 spans 64–215 (SGLNVPGNTI…AFALDYNKVK (152 aa)). Mn(2+) contacts are provided by His112 and His114. N-linked (GlcNAc...) asparagine glycosylation is present at Asn139. His161 lines the Mn(2+) pocket.

The protein belongs to the germin family. As to quaternary structure, oligomer (believed to be a pentamer but probably hexamer).

The protein localises to the secreted. Its subcellular location is the extracellular space. It localises to the apoplast. Functionally, may play a role in plant defense. Probably has no oxalate oxidase activity even if the active site is conserved. The chain is Germin-like protein subfamily 1 member 4 from Arabidopsis thaliana (Mouse-ear cress).